The following is a 178-amino-acid chain: Redox-sensing transcriptional repressor Rex (178 aa).

59-64 is a binding site for NAD(+); that stretch reads GVGNMG.

Belongs to the transcriptional regulatory Rex family. As to quaternary structure, homodimer.

The protein resides in the cytoplasm. In terms of biological role, modulates transcription in response to changes in cellular NADH/NAD(+) redox state. The sequence is that of Redox-sensing transcriptional repressor Rex from Streptococcus suis.